The primary structure comprises 520 residues: Probable methylmalonate-semialdehyde/malonate-semialdehyde dehydrogenase [acylating], mitochondrial (520 aa).

NAD(+) is bound by residues Ala169, Phe171, Lys195, Glu198, Arg199, and Ser248. The active-site Nucleophile is the Cys303. Glu403 contributes to the NAD(+) binding site.

Belongs to the aldehyde dehydrogenase family. Homotetramer.

The protein localises to the mitochondrion. It carries out the reaction 2-methyl-3-oxopropanoate + NAD(+) + CoA + H2O = propanoyl-CoA + hydrogencarbonate + NADH + H(+). The enzyme catalyses 3-oxopropanoate + NAD(+) + CoA + H2O = hydrogencarbonate + acetyl-CoA + NADH + H(+). In terms of biological role, probable malonate and methylmalonate semialdehyde dehydrogenase involved in the catabolism of valine, thymine, and compounds catabolized by way of beta-alanine, including uracil and cytidine. The chain is Probable methylmalonate-semialdehyde/malonate-semialdehyde dehydrogenase [acylating], mitochondrial from Drosophila melanogaster (Fruit fly).